Consider the following 38-residue polypeptide: Large ribosomal subunit protein bL36 (38 aa).

Belongs to the bacterial ribosomal protein bL36 family.

The chain is Large ribosomal subunit protein bL36 from Lactobacillus johnsonii (strain CNCM I-12250 / La1 / NCC 533).